The chain runs to 377 residues: RING-H2 finger protein ATL22 (377 aa).

The N-terminal stretch at 1–23 (MTSKLLPLLLNLIFLFFFPLLNA) is a signal peptide. Residues 244–264 (IMCLSLVGPLTALTFCVGLVM) traverse the membrane as a helical segment. The RING-type; atypical zinc finger occupies 327-369 (CPICLSEYATKETVRCLPECEHCFHTECIDAWLKLHSSCPVCR).

The protein belongs to the RING-type zinc finger family. ATL subfamily.

It is found in the membrane. The catalysed reaction is S-ubiquitinyl-[E2 ubiquitin-conjugating enzyme]-L-cysteine + [acceptor protein]-L-lysine = [E2 ubiquitin-conjugating enzyme]-L-cysteine + N(6)-ubiquitinyl-[acceptor protein]-L-lysine.. It functions in the pathway protein modification; protein ubiquitination. The polypeptide is RING-H2 finger protein ATL22 (ATL22) (Arabidopsis thaliana (Mouse-ear cress)).